The primary structure comprises 384 residues: Lipoyl synthase 2, chloroplastic (384 aa).

The transit peptide at 1–48 directs the protein to the chloroplast; the sequence is MAAYCSRVYHHHPVSPSTMQGSLARPSIHAGSASLTFRARPNSVSIVR. [4Fe-4S] cluster-binding residues include C108, C113, C119, C145, C149, C152, and S360. A Radical SAM core domain is found at 128 to 349; that stretch reads GDGDGIATAT…KEYGESLGFL (222 aa).

It belongs to the radical SAM superfamily. Lipoyl synthase family. [4Fe-4S] cluster serves as cofactor.

Its subcellular location is the plastid. The protein resides in the chloroplast. It catalyses the reaction [[Fe-S] cluster scaffold protein carrying a second [4Fe-4S](2+) cluster] + N(6)-octanoyl-L-lysyl-[protein] + 2 oxidized [2Fe-2S]-[ferredoxin] + 2 S-adenosyl-L-methionine + 4 H(+) = [[Fe-S] cluster scaffold protein] + N(6)-[(R)-dihydrolipoyl]-L-lysyl-[protein] + 4 Fe(3+) + 2 hydrogen sulfide + 2 5'-deoxyadenosine + 2 L-methionine + 2 reduced [2Fe-2S]-[ferredoxin]. It functions in the pathway protein modification; protein lipoylation via endogenous pathway; protein N(6)-(lipoyl)lysine from octanoyl-[acyl-carrier-protein]: step 2/2. Catalyzes the radical-mediated insertion of two sulfur atoms into the C-6 and C-8 positions of the octanoyl moiety bound to the lipoyl domains of lipoate-dependent enzymes, thereby converting the octanoylated domains into lipoylated derivatives. The polypeptide is Lipoyl synthase 2, chloroplastic (Oryza sativa subsp. indica (Rice)).